A 500-amino-acid polypeptide reads, in one-letter code: Cysteine--tRNA ligase (500 aa).

Residue Cys29 coordinates Zn(2+). Positions 31–41 (VTVYDLCHLGH) match the 'HIGH' region motif. Residues Cys213, His238, and Glu242 each coordinate Zn(2+). The 'KMSKS' region signature appears at 270 to 274 (KMSKS). Lys273 is an ATP binding site.

This sequence belongs to the class-I aminoacyl-tRNA synthetase family. In terms of assembly, monomer. The cofactor is Zn(2+).

Its subcellular location is the cytoplasm. The enzyme catalyses tRNA(Cys) + L-cysteine + ATP = L-cysteinyl-tRNA(Cys) + AMP + diphosphate. The protein is Cysteine--tRNA ligase of Prochlorococcus marinus (strain NATL1A).